A 71-amino-acid chain; its full sequence is Guanine nucleotide-binding protein G(I)/G(S)/G(O) subunit gamma-2 (71 aa).

Residue Ala2 is modified to N-acetylalanine. Position 68 is a cysteine methyl ester (Cys68). The S-geranylgeranyl cysteine moiety is linked to residue Cys68. The propeptide at Ala69–Leu71 is removed in mature form.

Belongs to the G protein gamma family. In terms of assembly, g proteins are composed of 3 units, alpha, beta and gamma. In this context, interacts with GNB2. The heterodimer formed by GNB1 and GNG2 interacts with ARHGEF5. The heterodimer formed by GNB1 and GNG2 interacts with GRK2. Component of the TAS2R14-GNAI1 complex, consisting of TAS2R14, GNAI1, GNB1 and GNG2. Forms complexes with TAS2R14 and G-proteins; these complexes play a role in the perception of bitterness. Component of the TAS2R14-GNAT3 complex, consisting of TAS2R14, GNAT3, GNB1 and GNG2. Component of the TAS2R14-GNAS2 complex, consisting of TAS2R14, GNAS2, GNB1 and GNG2. As to expression, adrenal gland and brain.

It localises to the cell membrane. Functionally, guanine nucleotide-binding proteins (G proteins) are involved as a modulator or transducer in various transmembrane signaling systems. The beta and gamma chains are required for the GTPase activity, for replacement of GDP by GTP, and for G protein-effector interaction. This is Guanine nucleotide-binding protein G(I)/G(S)/G(O) subunit gamma-2 (GNG2) from Bos taurus (Bovine).